Here is a 344-residue protein sequence, read N- to C-terminus: Flavonoid 7-O-methyltransferase 1B (344 aa).

Aspartate 211 lines the S-adenosyl-L-methionine pocket. The Proton acceptor role is filled by histidine 249.

The protein belongs to the class I-like SAM-binding methyltransferase superfamily. Cation-independent O-methyltransferase family. Homodimer.

The enzyme catalyses scutellarein + S-adenosyl-L-methionine = scutellarein 7-methyl ether + S-adenosyl-L-homocysteine. It carries out the reaction 4',7,8-trihydroxyflavone + S-adenosyl-L-methionine = 4',8-dihydroxy-7-methoxyflavone + S-adenosyl-L-homocysteine. The catalysed reaction is isorhamnetin + S-adenosyl-L-methionine = rhamnacene + S-adenosyl-L-homocysteine + H(+). It catalyses the reaction kaempferol + S-adenosyl-L-methionine = kaempferol 7-methyl ether + S-adenosyl-L-homocysteine + H(+). The enzyme catalyses (2S)-naringenin + S-adenosyl-L-methionine = (2S)-sakuranetin + S-adenosyl-L-homocysteine + H(+). It carries out the reaction quercetin + S-adenosyl-L-methionine = rhamnetin + S-adenosyl-L-homocysteine + H(+). The catalysed reaction is apigenin + S-adenosyl-L-methionine = genkwanin + S-adenosyl-L-homocysteine + H(+). It catalyses the reaction luteolin + S-adenosyl-L-methionine = luteolin 7-methyl ether + S-adenosyl-L-homocysteine + H(+). The protein operates within flavonoid metabolism. Functionally, flavonoid 7-O-methyltransferase involved in the biosynthesis of polymethoxylated flavonoids natural products such as pebrellin, aroma compounds which contribute to the flavor of peppermint, and exhibit pharmacological activities such as anti-allergic, anti-oxidant, antibacterial, anti-proliferative, and anti-inflammatory effects. Catalyzes S-adenosylmethionine-dependent regioselective 7-O-methylation of flavonoids; active on various hydroxylated flavonoid substrates, including luteolin (LUT), quercetin, kaempferol, isorhamnetin, apigenin (API), scutellarein (6-hydroxy-apigenin, 6-OH-API, SCU), 7,8,4'-trihydroxy-flavone and naringenin (NAR), and, with a lower efficiency, 7,8,3',4'-tetrahydroxy-flavone, taxifolin and hesperetin. This is Flavonoid 7-O-methyltransferase 1B from Mentha piperita (Peppermint).